The sequence spans 132 residues: Holo-[acyl-carrier-protein] synthase (132 aa).

Residues Asp-8 and Glu-62 each coordinate Mg(2+).

This sequence belongs to the P-Pant transferase superfamily. AcpS family. Mg(2+) is required as a cofactor.

Its subcellular location is the cytoplasm. It carries out the reaction apo-[ACP] + CoA = holo-[ACP] + adenosine 3',5'-bisphosphate + H(+). Functionally, transfers the 4'-phosphopantetheine moiety from coenzyme A to a Ser of acyl-carrier-protein. This chain is Holo-[acyl-carrier-protein] synthase, found in Polaromonas sp. (strain JS666 / ATCC BAA-500).